A 431-amino-acid polypeptide reads, in one-letter code: Homeobox protein knotted-1-like 3 (431 aa).

Residues 15–47 (NHFTDQHQPPPPQPPPPPPQQQQHFQEAPPPNW) form a disordered region. The span at 22–34 (QPPPPQPPPPPPQ) shows a compositional bias: pro residues. Residues 322-342 (ELKHELKQGYKEKIVDIREEI) form the ELK domain. The segment at residues 343 to 406 (LRKRRAGKLP…NQRKRNWHSN (64 aa)) is a DNA-binding region (homeobox; TALE-type). The segment at 402–431 (NWHSNPSSSTVLKNKRKSNAGDNSGRERFA) is disordered. Residues 404 to 413 (HSNPSSSTVL) are compositionally biased toward polar residues.

Belongs to the TALE/KNOX homeobox family. In terms of assembly, may form heterodimeric complex with the TALE/BELL proteins. Interacts with OFP1, OFP2, OFP4, OFP12 and OFP14. Interacts with KNATM-B.

Its subcellular location is the nucleus. The chain is Homeobox protein knotted-1-like 3 (KNAT3) from Arabidopsis thaliana (Mouse-ear cress).